The following is a 478-amino-acid chain: Muscarinic acetylcholine receptor M4 (478 aa).

The Extracellular portion of the chain corresponds to 1-30 (MXNFTPVNGSSANQSVRLVTAAHNHLETVE). 2 N-linked (GlcNAc...) asparagine glycosylation sites follow: N8 and N13. A helical membrane pass occupies residues 31-53 (MVFIATVTGSLSLVTVVGNILVM). Residues 54 to 67 (LSIKVNRQLQTVNN) lie on the Cytoplasmic side of the membrane. A helical transmembrane segment spans residues 68–88 (YFLFSLGCADLIIGAFSMNLY). The Extracellular segment spans residues 89–105 (TLYIIKGYWPLGAVVCD). A disulfide bridge connects residues C104 and C184. The helical transmembrane segment at 106-127 (LWLALDYVVSNASVMNLLIISF) threads the bilayer. The Cytoplasmic segment spans residues 128–147 (DRYFCVTKPLTYPARRTTKM). Residues 148 to 170 (AGLMIAAAWVLSFVLWAPAILFW) traverse the membrane as a helical segment. Topologically, residues 171–192 (QFVVGKRTVPDNQCFIQFLSNP) are extracellular. Residues 193–215 (AVTFGTAIAAFYLPVVIMTVLYI) form a helical membrane-spanning segment. The Cytoplasmic portion of the chain corresponds to 216–400 (HISLASRSRV…AARERKVTRT (185 aa)). A disordered region spans residues 271-333 (LEEAPPPALP…APTLQPRTLN (63 aa)). Over residues 274–285 (APPPALPPPPRP) the composition is skewed to pro residues. Residues 293–303 (NESSSGSATQN) show a composition bias toward polar residues. Residues 310 to 332 (TELSTAEATTPALPAPTLQPRTL) show a composition bias toward low complexity. The helical transmembrane segment at 401–421 (IFAILLAFILTWTPYNVMVLV) threads the bilayer. The Extracellular segment spans residues 422 to 435 (NTFCQSCIPERVWS). Residues 436-455 (IGYWLCYVNSTINPACYALC) traverse the membrane as a helical segment. The Cytoplasmic portion of the chain corresponds to 456–478 (NATFKKTFRHLLLCQYRNIGTAR). T458, T462, and T476 each carry phosphothreonine.

Belongs to the G-protein coupled receptor 1 family. Muscarinic acetylcholine receptor subfamily. CHRM4 sub-subfamily.

Its subcellular location is the cell membrane. It is found in the postsynaptic cell membrane. The muscarinic acetylcholine receptor mediates various cellular responses, including inhibition of adenylate cyclase, breakdown of phosphoinositides and modulation of potassium channels through the action of G proteins. Primary transducing effect is inhibition of adenylate cyclase. This is Muscarinic acetylcholine receptor M4 (Chrm4) from Rattus norvegicus (Rat).